We begin with the raw amino-acid sequence, 268 residues long: Putative ABC transporter ATP-binding protein MK0182 (268 aa).

In terms of domain architecture, ABC transporter spans 1 to 229 (MTHEYPDGTC…VDLIRESGLK (229 aa)). 29–36 (GPNGSGKT) is a binding site for ATP.

Belongs to the ABC transporter superfamily.

The protein localises to the cell membrane. Its function is as follows. Probably part of an ABC transporter complex. Responsible for energy coupling to the transport system. This is Putative ABC transporter ATP-binding protein MK0182 from Methanopyrus kandleri (strain AV19 / DSM 6324 / JCM 9639 / NBRC 100938).